Consider the following 372-residue polypeptide: Adaptive-response sensory kinase SasA (372 aa).

The Histidine kinase domain occupies 147–360 (MVAHELRTPL…CFHFTVPVWQ (214 aa)). Residue histidine 150 is modified to Phosphohistidine; by autocatalysis.

Homooligomerizes. Interacts with KaiC. Participates in the KaiBC complex, whose core is composed of a KaiC homohexamer and 6 KaiB.

The catalysed reaction is ATP + protein L-histidine = ADP + protein N-phospho-L-histidine.. In terms of biological role, member of the two-component regulatory system SasA/RpaA involved in genome-wide circadian gene expression. One of several clock output pathways. Participates in the Kai clock protein complex, the main circadian regulator in cyanobacteria, via its interaction with KaiC. KaiC enhances the autophosphorylation activity of SasA, which then transfers its phosphate group to RpaA to activate it. In addition to its output function, recruits fold-shifted KaiB (KaiB(fs)) to KaiC to cooperatively form the KaiB(6):KaiC(6) complex (independent of SasA kinase activity). Required for robustness of the circadian rhythm of gene expression and is involved in clock output, also required for adaptation to light/dark cycles. The polypeptide is Adaptive-response sensory kinase SasA (Prochlorococcus marinus (strain MIT 9215)).